We begin with the raw amino-acid sequence, 364 residues long: MTLWTIKIGTSLLRGNKEFSTNKIIETYCGFIAESKAKGDQVIIVSSGAVGLGCNRLGLKVRPNDLNSLQAAAAVGQGYLMSLYESAMKKYGYNVAQILLTRSDFESKRCFKNASLTIKKLLDWKVLPIINENDSIANEELRYGDNDTLSALVSTAISADQLVLLTDIDKLYSSDPKFDKDAKPITDVHSSNEIIQIQSNSNESNNWGTGGIKTKLTAAQIATKNGITVHLADGREPKILKDILKGSRGGTVFHPNPKPIGTMKSWLAHALYPQGTLHVDDGAYNAIQNKGASLLIVGIINIDGDFAKNQPVKIVNLEGIEIAKGISSISSESIRRFINNRIKSTQYPVVVHRDVLVLSSELLI.

An ATP-binding site is contributed by lysine 7. Serine 47, aspartate 134, and asparagine 146 together coordinate substrate. Residues 166–167 (TD) and 209–215 (TGGIKTK) contribute to the ATP site. The region spanning 274-349 (QGTLHVDDGA…NRIKSTQYPV (76 aa)) is the PUA domain.

Belongs to the glutamate 5-kinase family.

Its subcellular location is the cytoplasm. The enzyme catalyses L-glutamate + ATP = L-glutamyl 5-phosphate + ADP. It functions in the pathway amino-acid biosynthesis; L-proline biosynthesis; L-glutamate 5-semialdehyde from L-glutamate: step 1/2. Catalyzes the transfer of a phosphate group to glutamate to form L-glutamate 5-phosphate. The protein is Glutamate 5-kinase of Prochlorococcus marinus (strain SARG / CCMP1375 / SS120).